The chain runs to 194 residues: Calcium channel flower (194 aa).

Over 1 to 34 (MSFAEKITGLLARPNQQDPIGPEQPWYLKYGSRL) the chain is Cytoplasmic. Residues 35–55 (LGIVAAFFAILFGLWNVFSII) form a helical membrane-spanning segment. Over 56–65 (TLSVSCLVAG) the chain is Extracellular. Residues 66–88 (ILQMVAGFVVMLLEAPCCFVCFG) form a helical membrane-spanning segment. Residues 89-106 (QVNEIAEKVESKPLYFRA) are Cytoplasmic-facing. A helical transmembrane segment spans residues 107 to 127 (GLYIAMAIPPIILCFGLASLF). The Extracellular segment spans residues 128-194 (GSGLIFGTGV…TGAVGTDSNV (67 aa)). Important for promoting apoptosis regions lie at residues 135-157 (TGVVYGMMALGKKASAEDMRAAA) and 135-192 (TGVV…GTDS).

The protein belongs to the calcium channel flower family. Associates with the dally/ magu complex. As to quaternary structure, homomultimer. Associates with the dally/ magu complex. In terms of tissue distribution, detected in the imaginal wing disk (at protein level). Detected throughout the adult brain, including the optic lobe but, at much lower levels of expression than isoform Lose-A. As to expression, detected in the optic lobe (at protein level). Detected throughout the adult brain, including the optic lobe. Expressed in damaged and undamaged optic lobe neurons. In terms of tissue distribution, expressed in optic lobe neurons, with higher levels of expression in suboptimal neurons. Specifically expressed in injury-damaged optic lobe neurons.

The protein resides in the cell membrane. It localises to the cytoplasmic vesicle. The protein localises to the secretory vesicle. It is found in the synaptic vesicle membrane. Its subcellular location is the presynaptic cell membrane. The protein resides in the endosome. It localises to the synaptic vesicle. With respect to regulation, channel activity is inhibited by La(3+), which reduces Ca(2+) influx and thus inhibits it's function in promoting activity-dependent bulk endocytosis (ADBE) in response to high stimuli. Its function is as follows. Transmembrane protein which mediates synaptic endocytosis, fitness-based cell culling, neuronal culling, morphogen gradient scaling, and calcium transport. Regulates synaptic endocytosis and hence couples exo- with endocytosis. Controls two major modes of synaptic vesicle (SV) endocytosis in the synaptic boutons of neuromuscular junctions (NMJs); Ca(2+) channel-independent Clathrin-mediated endocytosis (CME) in response to mild stimulation, and Ca(2+) channel-dependent activity-dependent bulk endocytosis (ADBE) in response to strong stimulation. Functions in ADBE and subsequent SV reformation from bulk endosomes by initiating Ca(2+) channel-dependent phosphatidylinositol 4,5-bisphosphate (PtdIns(4,5)P2) compartmentalization in synaptic boutons. There it acts at the periactive zone to provide the low Ca(2+) levels required to initiate Calcineurin activation and upregulate PtdIns(4,5)P2. Conversely PtdIns(4,5)P2 enhances fwe Ca(2+) channel-activity, establishing a positive feedback loop that induces PtdIns(4,5)P2 microdomain at the periactive zone. These microdomains trigger bulk membrane invagination (i.e. ADBE) by triggering actin polymerization while also promoting localization of fwe to bulk endosomes, thereby removing the ADBE trigger to reduce endocytosis and prevent excess membrane uptake. PtdIns(4,5)P2 then promotes SV reformation from the bulk endosomes, to coordinate ADBE and subsequent SV reformation. Different combinations of the flower isoforms at the cell membrane are also required for the identification and elimination of suboptimal or supernumerary cells during development, regeneration, and adulthood. Required for the recognition and elimination of unfit cells in the developing wing during cell competition. Also required for efficient identification and elimination of injured, damaged and/or dysfunctional neurons during regeneration of the adult brain. In the developing pupal retina, mediates the elimination of unwanted postmitotic neurons, including supernumerary photoreceptor neurons that form at the periphery of the retina and are contained within incomplete ommatidia units. Downstream of the flower fitness fingerprints, cells identified as unwanted or unfit are eliminated via apoptosis through the expression of ahuizotl (azot). However, the cells marked for elimination by the flower isoforms only undergo apoptosis if additional thresholds are met; (1) their neighboring fit/healthy cells express different levels of the fwe isoforms, and (2) the levels of the protective signal SPARC expressed by the loser or unwanted cells are unable to inhibit caspase activation. These additional thresholds for flower-mediated apoptosis, allows useful cells to recover from transient and limited stress before they are unnecessarily eliminated. Functions with dally and magu in a mechanism of scaling, which utilises apoptosis to ensure that the dpp morphogen gradient, which mediates organ growth, remains proportional to the size of the growing wing. In this mechanism, fwe represses dally- and Magu-dependent activity in expanding the gradient, and dally/Magu inhibits fwe-dependent apoptosis to keep cell death rate low. When the levels of these different proteins are optimally regulated the gradient correctly scales with organ growth but when this fails, fwe-mediated apoptosis is activated to trim the developing tissue to match the correct size of the gradient. Functionally, functions with the other flower isoforms to produce tissue-specific fitness fingerprints that identify unfit or fit cells during cell selection processes in order to maintain tissue health. In the wing imaginal disk, this isoform is highly expressed in healthy/normal cells but is down-regulated in cells with decreased fitness. During cell competition, if levels of this isoform in unfit cells is lower than in the surrounding neighboring cells, the suboptimal cells are recognized as 'loser' cells, and undergo elimination via apoptosis to be replaced by the surrounding healthy 'winner' cell population. In terms of biological role, functions with the other flower isoforms to produce tissue-specific fitness fingerprints that identify unfit or fit cells during cell selection processes in order to maintain tissue health. In the wing imaginal disk, this isoform displays low levels of expression in healthy/normal cells but is up-regulated in cells with decreased fitness. During cell competition, if levels of this isoform in unfit cells is higher than in the surrounding neighboring cells, the suboptimal cells are recognized as 'loser' cells, and undergo elimination via apoptosis to be replaced by the surrounding healthy 'winner' cell population. Functions with the other flower isoforms to produce tissue-specific fitness fingerprints that identify unfit cells for cell selection processes during development, regeneration, and to maintain tissue health. During cell competition in certain tissues, marks suboptimal or damaged cells as 'loser' cells. In cells of the wing imaginal disk and damaged or dysfunctional neurons in the adult optic lobe, this isoform displays low to no expression in healthy/normal cells but is up-regulated in cells with decreased fitness or damage-affected neurons. During cell competition, if levels of this isoform in unfit cells is higher than in the surrounding neighboring cells, the suboptimal cells are recognized as 'loser' cells, and undergo elimination via apoptosis to be replaced by the surrounding healthy/undamaged 'winner' cell population. In the developing pupal retina, also required for the recognition and elimination of postmitotic neurons, including supernumerary photoreceptor neurons that form at the periphery of the retina and are contained within incomplete ommatidia units. Activity at the peripheral retina is induced by the wg signaling pathway but, once activated, it promotes apoptosis of supernumerary photoreceptor neurons independently of wg signaling and snail function. In Drosophila melanogaster (Fruit fly), this protein is Calcium channel flower (fwe).